The following is a 186-amino-acid chain: ATP synthase subunit delta (186 aa).

It belongs to the ATPase delta chain family. As to quaternary structure, F-type ATPases have 2 components, F(1) - the catalytic core - and F(0) - the membrane proton channel. F(1) has five subunits: alpha(3), beta(3), gamma(1), delta(1), epsilon(1). CF(0) has four main subunits: a(1), b(1), b'(1) and c(10-14). The alpha and beta chains form an alternating ring which encloses part of the gamma chain. F(1) is attached to F(0) by a central stalk formed by the gamma and epsilon chains, while a peripheral stalk is formed by the delta, b and b' chains.

The protein resides in the cell inner membrane. F(1)F(0) ATP synthase produces ATP from ADP in the presence of a proton or sodium gradient. F-type ATPases consist of two structural domains, F(1) containing the extramembraneous catalytic core and F(0) containing the membrane proton channel, linked together by a central stalk and a peripheral stalk. During catalysis, ATP synthesis in the catalytic domain of F(1) is coupled via a rotary mechanism of the central stalk subunits to proton translocation. Its function is as follows. This protein is part of the stalk that links CF(0) to CF(1). It either transmits conformational changes from CF(0) to CF(1) or is implicated in proton conduction. The chain is ATP synthase subunit delta from Rhodospirillum centenum (strain ATCC 51521 / SW).